A 113-amino-acid chain; its full sequence is MGGRGMNPAKMKQMMKQMGIDVKELKDVKEVIIKTADSNIVIENANVTIMTVQGSETYQIVGDAKEVPKSLEIPADDIKLVMEQTGVSEEEARNALKNSNGDLAEAIVALSSA.

The NAC-A/B domain maps to 5-73 (GMNPAKMKQM…AKEVPKSLEI (69 aa)).

The protein belongs to the NAC-alpha family. In terms of assembly, homodimer. Interacts with the ribosome. Binds ribosomal RNA.

Contacts the emerging nascent chain on the ribosome. This is Nascent polypeptide-associated complex protein from Methanosarcina acetivorans (strain ATCC 35395 / DSM 2834 / JCM 12185 / C2A).